The primary structure comprises 888 residues: Calcium-transporting ATPase 1 (888 aa).

4 consecutive transmembrane segments (helical) span residues 53-75, 79-97, 246-266, and 283-303; these read IFAQ…SAFV, ADAS…IGVV, VGKY…LIGF, and AVAA…AIGV. 4 residues coordinate Ca(2+): valine 284, alanine 285, isoleucine 287, and glutamate 289. Catalysis depends on aspartate 331, which acts as the 4-aspartylphosphate intermediate. The next 6 membrane-spanning stretches (helical) occupy residues 675–695, 703–723, 747–767, 791–811, 831–851, and 865–885; these read ILFL…AILL, PIHI…SLGV, VPFL…AFIA, LLHA…VHSF, LVFS…IPPL, and WGFV…IKLA. Ca(2+)-binding residues include asparagine 710 and aspartate 714.

This sequence belongs to the cation transport ATPase (P-type) (TC 3.A.3) family. Type IIA subfamily.

The protein resides in the cell membrane. It catalyses the reaction Ca(2+)(in) + ATP + H2O = Ca(2+)(out) + ADP + phosphate + H(+). Inhibited by cyclopiazonic acid (CPA). Its function is as follows. Catalyzes the hydrolysis of ATP coupled with the transport of calcium. The polypeptide is Calcium-transporting ATPase 1 (Bacillus cereus (strain ATCC 10987 / NRS 248)).